A 260-amino-acid polypeptide reads, in one-letter code: Trans-aconitate 2-methyltransferase (260 aa).

This sequence belongs to the methyltransferase superfamily. Tam family.

It is found in the cytoplasm. It carries out the reaction trans-aconitate + S-adenosyl-L-methionine = (E)-3-(methoxycarbonyl)pent-2-enedioate + S-adenosyl-L-homocysteine. Functionally, catalyzes the S-adenosylmethionine monomethyl esterification of trans-aconitate. This Methylobacterium radiotolerans (strain ATCC 27329 / DSM 1819 / JCM 2831 / NBRC 15690 / NCIMB 10815 / 0-1) protein is Trans-aconitate 2-methyltransferase.